The following is a 203-amino-acid chain: CCG-binding protein 1 (203 aa).

The interval 156-178 (IPDGLPKSEQELEEEEKSKMPDS) is disordered. The segment covering 161 to 175 (PKSEQELEEEEKSKM) has biased composition (basic and acidic residues).

As to quaternary structure, homotetramer. Interacts with MEE12/CCG, MED7A, MED7B, MED9, AGL49, AGL53, AGL75, AGL80, AGL81, AGL82, AGL103 and NRPB1 (via CTD). In terms of tissue distribution, expressed in roots, leaves, stems and flowers. Expressed in the central cell of mature ovules.

Its subcellular location is the nucleus. It is found in the cytoplasm. Functionally, required for the development of the one-cell zygote and endosperm in embryos. Required for micropylar pollen tube guidance, but has no effect on ovule development and gametophytic cell fate specification. May connect transcription factors and the Pol II machinery to regulate pollen tube attraction, via its interactions with AGAMOUS-like (AGL) transcription factors, MEE14/CCG and the Mediator complex. This chain is CCG-binding protein 1, found in Arabidopsis thaliana (Mouse-ear cress).